Reading from the N-terminus, the 391-residue chain is Testis-expressed protein 9 (391 aa).

2 disordered regions span residues 1–31 and 65–85; these read MAGR…PGPD and QEVR…EDDY. A coiled-coil region spans residues 188–351; that stretch reads IGTEAQIRFL…EKQKGELMIG (164 aa).

The protein localises to the cytoplasm. It localises to the cytoskeleton. It is found in the microtubule organizing center. The protein resides in the centrosome. Its subcellular location is the centriolar satellite. This Homo sapiens (Human) protein is Testis-expressed protein 9 (TEX9).